The chain runs to 405 residues: Neisseria adhesin A (405 aa).

A signal peptide spans 1–23 (MKHFPSKVLTTAILATFCSGALA). The interval 24–87 (ATNDDDVKKA…ADDFKGLGLK (64 aa)) is head domain. Coiled coils occupy residues 87-170 (KKVV…KLEA) and 181-329 (AFND…LRKE). Residues 88 to 350 (KVVTNLTKTV…SGLFQPYNVG (263 aa)) form a coiled stalk domain region. The interval 312–350 (HDTRLNGLDKTVSDLRKETRQGLAEQAALSGLFQPYNVG) is outer membrane translocation of the passenger domain. 4 beta stranded membrane passes run 350-360 (GRFNVTAAVGG), 364-375 (ESAVAIGTGFRF), 382-388 (KAGVAVG), and 394-405 (SAAYHVGVNYEW). The tract at residues 351–405 (RFNVTAAVGGYKSESAVAIGTGFRFTENFAAKAGVAVGTSSGSSAAYHVGVNYEW) is translocator domain.

It belongs to the autotransporter-2 (AT-2) (TC 1.B.40) family. The non-membrane anchored protein (residues 24-350) probably forms a homotrimer; it is assumed the mature protein forms trimers in situ. The mature protein without the membrane-targeting segment (residues 24-350) binds to human heat shock 90 beta protein (HSP90AB1) both in vitro and when incubated with human monocytes. A subsequent paper showed binding of the same fragment in epithelial cells to both HSP90AA1 and HSP90AB1; in vitro the interaction is stabilized by ADP and the Hsp90 inhibitor 17-AAG (17-N-allylamino-17-demethoxygeldanamycin), in vitro and in vivo both interactions are inhibited by ATP. Binds human oxidized low-density lipoprotein receptor 1 (LOX-1, OLR1) in protein microarrays, in solution and when LOX-1 is expressed on the cell surface. Binds via the head and the beginning of the coiled stalk (residues 24-170); binding can be abrogated by monoclonal antibodies against those specific regions of NadA. Other potential binding partners were identified but not characterized in the same study. Forms high molecular weight oligomers in whole cell extracts that are not disrupted by boiling in SDS buffer.

Its subcellular location is the cell outer membrane. The protein resides in the cell surface. In terms of biological role, adheres to and induces bacterial uptake by human epithelial cells in a microfilament-dependent process. Binding is reduced by pronase treatment, suggesting there is a protein receptor on the human cells. Possible human protein receptors include integrin beta-1 (ITGB1) and oxidized low-density lipoprotein receptor 1 (OLR1). Binds to extracellular human Hsp90 (preferentially the beta isoform, HSP90AB1) on monocytes, binding stimulates monocytes in a TLR4-dependent fashion, polymixin B, which binds NadA, blocks the activation. Hsp90 is probably not the first receptor on human monocytes. Non-membrane anchored protein (residues 24-350) is internalized into human epithelial cells by hijacking the endosome recycling pathway and may be recycled back to the cell surface, which might aid transcellular trafficking of the bacteria. A bacterial cell surface protein; antisera against this protein induce complement-mediated killing of this and other strains. The chain is Neisseria adhesin A from Neisseria meningitidis serogroup B.